We begin with the raw amino-acid sequence, 405 residues long: Phosphoglycerate kinase (405 aa).

Substrate-binding positions include 24–26, R40, 63–66, R122, and R162; these read DFN and HLGR. Residues K212, E331, and 361–364 contribute to the ATP site; that span reads GGDS.

Belongs to the phosphoglycerate kinase family. In terms of assembly, monomer.

Its subcellular location is the cytoplasm. The catalysed reaction is (2R)-3-phosphoglycerate + ATP = (2R)-3-phospho-glyceroyl phosphate + ADP. Its pathway is carbohydrate degradation; glycolysis; pyruvate from D-glyceraldehyde 3-phosphate: step 2/5. This Corynebacterium aurimucosum (strain ATCC 700975 / DSM 44827 / CIP 107346 / CN-1) (Corynebacterium nigricans) protein is Phosphoglycerate kinase.